A 307-amino-acid polypeptide reads, in one-letter code: Vesicle-trafficking protein SEC22a (307 aa).

Ser2 is modified (N-acetylserine). Residues 2-187 are Cytoplasmic-facing; it reads SMILSASVIR…ISSAHQRLEP (186 aa). Phosphoserine occurs at positions 6 and 8. The 112-residue stretch at 8-119 folds into the Longin domain; it reads SVIRVRDGLP…YCFIEFDNFI (112 aa). A helical membrane pass occupies residues 188 to 208; that stretch reads ATLSGIVGFILSLLCGALNLI. The Lumenal segment spans residues 209 to 226; the sequence is RGFHAIESLLQSDGDDFN. Residues 227 to 247 form a helical membrane-spanning segment; it reads YIIAFFLGTAACLYQCYLLVY. Over 248-253 the chain is Cytoplasmic; the sequence is YTGWRN. Residues 254–271 form a helical membrane-spanning segment; sequence VKSFLTFGLICLCNMYLY. Over 272-274 the chain is Lumenal; it reads ELR. A helical transmembrane segment spans residues 275–295; that stretch reads NLWQLFFHVTVGAFVTLQIWL. At 296-307 the chain is on the cytoplasmic side; it reads RQAQGKAPDYDV.

It belongs to the synaptobrevin family.

Its subcellular location is the endoplasmic reticulum membrane. Functionally, may be involved in vesicle transport between the ER and the Golgi complex. The polypeptide is Vesicle-trafficking protein SEC22a (SEC22A) (Macaca fascicularis (Crab-eating macaque)).